The following is a 278-amino-acid chain: Putative phosphoenolpyruvate synthase regulatory protein (278 aa).

ADP is bound at residue 158–165; it reads GVSRSGKT.

It belongs to the pyruvate, phosphate/water dikinase regulatory protein family. PSRP subfamily.

It carries out the reaction [pyruvate, water dikinase] + ADP = [pyruvate, water dikinase]-phosphate + AMP + H(+). It catalyses the reaction [pyruvate, water dikinase]-phosphate + phosphate + H(+) = [pyruvate, water dikinase] + diphosphate. Its function is as follows. Bifunctional serine/threonine kinase and phosphorylase involved in the regulation of the phosphoenolpyruvate synthase (PEPS) by catalyzing its phosphorylation/dephosphorylation. In Acinetobacter baumannii (strain AYE), this protein is Putative phosphoenolpyruvate synthase regulatory protein.